Here is a 136-residue protein sequence, read N- to C-terminus: Histone H3.2 (136 aa).

The segment at 1–43 (MARTKQTARKSTGGKAPRKQLATKAARKSAPATGGVKKPHRFR) is disordered. An N6,N6,N6-trimethyllysine; alternate mark is found at Lys5 and Lys10. N6,N6-dimethyllysine; alternate is present on residues Lys5 and Lys10. N6-methyllysine; alternate is present on residues Lys5 and Lys10. Lys10 carries the post-translational modification N6-acetyllysine; alternate. At Ser11 the chain carries Phosphoserine. The residue at position 12 (Thr12) is a Phosphothreonine. Lys15 is modified (N6-acetyllysine). N6-methyllysine; alternate occurs at positions 19, 24, and 28. 2 positions are modified to N6-acetyllysine; alternate: Lys19 and Lys24. Lys28 is modified (N6,N6,N6-trimethyllysine; alternate). N6,N6-dimethyllysine; alternate is present on Lys28. Residue Ser29 is modified to Phosphoserine. An N6,N6,N6-trimethyllysine; alternate modification is found at Lys37. Lys37 carries the post-translational modification N6,N6-dimethyllysine; alternate. Lys37 carries the post-translational modification N6-methyllysine; alternate.

It belongs to the histone H3 family. The nucleosome is a histone octamer containing two molecules each of H2A, H2B, H3 and H4 assembled in one H3-H4 heterotetramer and two H2A-H2B heterodimers. The octamer wraps approximately 147 bp of DNA. Acetylation is generally linked to gene activation. Can be acetylated to form H3K9ac, H3K14ac, H3K18ac and H3K23ac. H3K9ac could compete with H3K9me and prevent gene silencing. H3K9ac is restricted to euchromatin. In terms of processing, methylated to form mainly H3K4me, H3K9me, H3K18me, H3K23me, H3K27me and H3K36me. H3K4me1/2/3, H3K9me3, H3K27me3 and H3K36me1/2/3 are typical marks for euchromatin, whereas heterochromatic chromocenters are enriched in H3K9me1/2 and H3K27me1/2. H2BK143ub1 is probably prerequisite for H3K4me. Post-translationally, can be phosphorylated to form H3S10ph, H3T11ph and H3S28ph.

It localises to the nucleus. The protein localises to the chromosome. Functionally, core component of nucleosome. Nucleosomes wrap and compact DNA into chromatin, limiting DNA accessibility to the cellular machineries which require DNA as a template. Histones thereby play a central role in transcription regulation, DNA repair, DNA replication and chromosomal stability. DNA accessibility is regulated via a complex set of post-translational modifications of histones, also called histone code, and nucleosome remodeling. The chain is Histone H3.2 from Brassica napus (Rape).